We begin with the raw amino-acid sequence, 246 residues long: MyoD family inhibitor domain-containing protein (246 aa).

Disordered regions lie at residues 1–93 and 134–164; these read MSQE…EEET and KIQS…ASPE. Residues 1-170 lie on the Extracellular side of the membrane; that stretch reads MSQEREPFSP…ASPEDGCVHC (170 aa). The segment covering 63–87 has biased composition (polar residues); sequence EDNSNSQPIKAQPQRLPQPNTSALE. Residues 74–246 form the MDFI domain; sequence QPQRLPQPNT…MECCGICFPS (173 aa). A helical transmembrane segment spans residues 171–188; it reads ILTCLFCEFLTLCNIVVG. The Cytoplasmic portion of the chain corresponds to 189-246; the sequence is QASCGICTSEACCCCCTEEMGDDCNCPCDMDCGIMDACCESSDCLEICMECCGICFPS.

The protein belongs to the MDFI family. As to expression, expressed broadly at a low level in the early embryo.

The protein localises to the cytoplasm. It is found in the cell membrane. Its subcellular location is the secreted. Functionally, required to control the activity of various transcription factors through their sequestration in the cytoplasm. Retains nuclear Zic proteins in the cytoplasm and inhibits their transcriptional activation. Required for dorsoanterior development. Necessary for siamois to activate downstream target genes, including gsc, during execution of the dorsal organizer program. Also regulates the transcriptional activity of TCF7L1/TCF3 by interacting directly with TCF7L1/TCF3 and preventing it from binding DNA. Involved in the development of lymphatic vessel valves. It is required to promote lymphatic endothelial cell migration, in a process that involves down-regulation of integrin beta 1 activation and control of cell adhesion to the extracellular matrix. The polypeptide is MyoD family inhibitor domain-containing protein (Xenopus laevis (African clawed frog)).